We begin with the raw amino-acid sequence, 100 residues long: NADH-quinone oxidoreductase subunit K (100 aa).

3 helical membrane passes run 2-22 (VPTT…MIGV), 29-49 (IMVF…LVAF), and 63-83 (FIVM…IVAI).

The protein belongs to the complex I subunit 4L family. In terms of assembly, NDH-1 is composed of 15 different subunits. Subunits NuoA, H, J, K, L, M, N constitute the membrane sector of the complex.

It is found in the cell membrane. The catalysed reaction is a quinone + NADH + 5 H(+)(in) = a quinol + NAD(+) + 4 H(+)(out). NDH-1 shuttles electrons from NADH, via FMN and iron-sulfur (Fe-S) centers, to quinones in the respiratory chain. The immediate electron acceptor for the enzyme in this species is believed to be a menaquinone. Couples the redox reaction to proton translocation (for every two electrons transferred, four hydrogen ions are translocated across the cytoplasmic membrane), and thus conserves the redox energy in a proton gradient. The polypeptide is NADH-quinone oxidoreductase subunit K (Deinococcus deserti (strain DSM 17065 / CIP 109153 / LMG 22923 / VCD115)).